The primary structure comprises 350 residues: Methionine import ATP-binding protein MetN 1 (350 aa).

Residues 12–251 (IDLKNITVLF…PSREVTQDFV (240 aa)) form the ABC transporter domain. An ATP-binding site is contributed by 48-55 (GYSGAGKS).

The protein belongs to the ABC transporter superfamily. Methionine importer (TC 3.A.1.24) family. The complex is composed of two ATP-binding proteins (MetN), two transmembrane proteins (MetI) and a solute-binding protein (MetQ).

The protein localises to the cell membrane. The catalysed reaction is L-methionine(out) + ATP + H2O = L-methionine(in) + ADP + phosphate + H(+). It catalyses the reaction D-methionine(out) + ATP + H2O = D-methionine(in) + ADP + phosphate + H(+). In terms of biological role, part of the ABC transporter complex MetNIQ involved in methionine import. Responsible for energy coupling to the transport system. The chain is Methionine import ATP-binding protein MetN 1 from Oenococcus oeni (strain ATCC BAA-331 / PSU-1).